The primary structure comprises 380 residues: Glucose-1-phosphate adenylyltransferase (380 aa).

Residues glycine 164, 179-180, and serine 190 each bind alpha-D-glucose 1-phosphate; that span reads EK.

It belongs to the bacterial/plant glucose-1-phosphate adenylyltransferase family. As to quaternary structure, homotetramer.

The catalysed reaction is alpha-D-glucose 1-phosphate + ATP + H(+) = ADP-alpha-D-glucose + diphosphate. The protein operates within glycan biosynthesis; glycogen biosynthesis. Involved in the biosynthesis of ADP-glucose, a building block required for the elongation reactions to produce glycogen. Catalyzes the reaction between ATP and alpha-D-glucose 1-phosphate (G1P) to produce pyrophosphate and ADP-Glc. The polypeptide is Glucose-1-phosphate adenylyltransferase (Lacticaseibacillus casei (strain BL23) (Lactobacillus casei)).